Here is a 955-residue protein sequence, read N- to C-terminus: Sex determination protein fruitless (955 aa).

Disordered regions lie at residues 1–55 and 70–89; these read MMAT…HAHS and IETDVRAPPPPLPPPPLPLP. The span at 35–55 shows a compositional bias: basic residues; the sequence is PHGHGHLHSHAHAHGHGHAHS. The span at 76–89 shows a compositional bias: pro residues; the sequence is APPPPLPPPPLPLP. The BTB domain maps to 131–196; the sequence is CDVTLACEGE…MYKGEVNVGQ (66 aa). Disordered regions lie at residues 229 to 288, 352 to 526, and 784 to 814; these read LRDS…SMSE, NRSA…LGGG, and ANHQLHQHPPSATHPSHSQSSPHYPSASGAG. The segment covering 233–246 has biased composition (polar residues); that stretch reads AASSPTGRGPSNYT. Basic and acidic residues-rich tracts occupy residues 258-279 and 360-379; these read AMRESRDSLRSRCERDLRDELT and CSDRGSERGTLERTDSRDDL. The segment covering 387-420 has biased composition (low complexity); it reads KDNNNSNSSSTGGNNNNNNNNNNNSSSNNNNSSS. Residues 421-446 are compositionally biased toward basic and acidic residues; sequence NRERNNSGERERERERERERDRDREL. 2 stretches are compositionally biased toward low complexity: residues 464–475 and 790–814; these read SSSNCDNSLSSS and QHPPSATHPSHSQSSPHYPSASGAG. A C2H2-type zinc finger spans residues 918 to 941; it reads HECPVCGQKFTRRDNMKAHCKIKH.

As to expression, expressed in parts of the adult male brain associated with the courtship song and steps of the male courtship. Also expressed in the larval and pupal male mushroom body and optic lobe. Expressed in pupal female optic lobe.

The protein localises to the nucleus. Functionally, probably acts as a transcriptional regulator. Part of the somatic sex determination hierarchy; sex determination genes transformer (tra) and transformer-2 (tra-2) switch fru splicing from the male-specific pattern to the female-specific pattern through activation of the female-specific fru 5'-splice site. Vital for the development of males and females. Controls the development of the male specific abdominal muscle of Lawrence. Plays a role in male courtship behavior and sexual orientation. Enhances male-specific expression of takeout in brain-associated fat body. The polypeptide is Sex determination protein fruitless (fru) (Drosophila melanogaster (Fruit fly)).